Here is a 324-residue protein sequence, read N- to C-terminus: Methionyl-tRNA formyltransferase (324 aa).

Serine 109–proline 112 contacts (6S)-5,6,7,8-tetrahydrofolate.

It belongs to the Fmt family.

It carries out the reaction L-methionyl-tRNA(fMet) + (6R)-10-formyltetrahydrofolate = N-formyl-L-methionyl-tRNA(fMet) + (6S)-5,6,7,8-tetrahydrofolate + H(+). Attaches a formyl group to the free amino group of methionyl-tRNA(fMet). The formyl group appears to play a dual role in the initiator identity of N-formylmethionyl-tRNA by promoting its recognition by IF2 and preventing the misappropriation of this tRNA by the elongation apparatus. This chain is Methionyl-tRNA formyltransferase, found in Acidothermus cellulolyticus (strain ATCC 43068 / DSM 8971 / 11B).